The primary structure comprises 576 residues: Sulfite reductase [NADPH] hemoprotein beta-component (576 aa).

Residues cysteine 439, cysteine 445, cysteine 485, and cysteine 489 each contribute to the [4Fe-4S] cluster site. Cysteine 489 lines the siroheme pocket.

Belongs to the nitrite and sulfite reductase 4Fe-4S domain family. Alpha(8)-beta(8). The alpha component is a flavoprotein, the beta component is a hemoprotein. It depends on siroheme as a cofactor. [4Fe-4S] cluster is required as a cofactor.

It catalyses the reaction hydrogen sulfide + 3 NADP(+) + 3 H2O = sulfite + 3 NADPH + 4 H(+). The protein operates within sulfur metabolism; hydrogen sulfide biosynthesis; hydrogen sulfide from sulfite (NADPH route): step 1/1. Component of the sulfite reductase complex that catalyzes the 6-electron reduction of sulfite to sulfide. This is one of several activities required for the biosynthesis of L-cysteine from sulfate. The protein is Sulfite reductase [NADPH] hemoprotein beta-component of Aliivibrio fischeri (strain ATCC 700601 / ES114) (Vibrio fischeri).